The primary structure comprises 380 residues: Transmembrane protein 229A (380 aa).

The disordered stretch occupies residues 1-40 (MAGSDVDSEGPARRGGAARRPGAPGGPGSEAAAGCPEPLS). Transmembrane regions (helical) follow at residues 51–71 (LPAW…DVLV) and 117–137 (AFVF…TLAG). The disordered stretch occupies residues 188 to 236 (RQQQQQQQQQQQQRRGALPVPPGARVPTAAGARRRRPRGPRGAGGAPSQ). Residues 190-202 (QQQQQQQQQQQRR) show a composition bias toward low complexity. 4 consecutive transmembrane segments (helical) span residues 244–264 (FLFF…FFNV), 278–298 (LWSF…YFHL), 310–330 (VPIY…GLRT), and 343–363 (LNFM…LSVY).

Belongs to the TMEM229 family.

The protein resides in the membrane. This Homo sapiens (Human) protein is Transmembrane protein 229A (TMEM229A).